Here is a 323-residue protein sequence, read N- to C-terminus: 3-dehydroquinate synthase (323 aa).

The protein belongs to the archaeal-type DHQ synthase family.

It carries out the reaction 2-amino-2,3,7-trideoxy-D-lyxo-hept-6-ulosonate + NAD(+) + H2O = 3-dehydroquinate + NH4(+) + NADH + H(+). Catalyzes the oxidative deamination and cyclization of 2-amino-3,7-dideoxy-D-threo-hept-6-ulosonic acid (ADH) to yield 3-dehydroquinate (DHQ), which is fed into the canonical shikimic pathway of aromatic amino acid biosynthesis. The protein is 3-dehydroquinate synthase of Archaeoglobus fulgidus (strain ATCC 49558 / DSM 4304 / JCM 9628 / NBRC 100126 / VC-16).